The chain runs to 170 residues: 6,7-dimethyl-8-ribityllumazine synthase (170 aa).

5-amino-6-(D-ribitylamino)uracil-binding positions include tryptophan 25, 57–59 (AVE), and 79–81 (AVI). Residue 84 to 85 (DT) coordinates (2S)-2-hydroxy-3-oxobutyl phosphate. Histidine 87 acts as the Proton donor in catalysis. 5-amino-6-(D-ribitylamino)uracil is bound at residue asparagine 112. Arginine 126 serves as a coordination point for (2S)-2-hydroxy-3-oxobutyl phosphate.

The protein belongs to the DMRL synthase family.

It catalyses the reaction (2S)-2-hydroxy-3-oxobutyl phosphate + 5-amino-6-(D-ribitylamino)uracil = 6,7-dimethyl-8-(1-D-ribityl)lumazine + phosphate + 2 H2O + H(+). It functions in the pathway cofactor biosynthesis; riboflavin biosynthesis; riboflavin from 2-hydroxy-3-oxobutyl phosphate and 5-amino-6-(D-ribitylamino)uracil: step 1/2. Functionally, catalyzes the formation of 6,7-dimethyl-8-ribityllumazine by condensation of 5-amino-6-(D-ribitylamino)uracil with 3,4-dihydroxy-2-butanone 4-phosphate. This is the penultimate step in the biosynthesis of riboflavin. This Thermobifida fusca (strain YX) protein is 6,7-dimethyl-8-ribityllumazine synthase.